The following is a 115-amino-acid chain: Large ribosomal subunit protein bL19 (115 aa).

This sequence belongs to the bacterial ribosomal protein bL19 family.

Its function is as follows. This protein is located at the 30S-50S ribosomal subunit interface and may play a role in the structure and function of the aminoacyl-tRNA binding site. In Streptococcus pneumoniae serotype 2 (strain D39 / NCTC 7466), this protein is Large ribosomal subunit protein bL19.